Here is a 93-residue protein sequence, read N- to C-terminus: UPF0358 protein lmo1070 (93 aa).

Belongs to the UPF0358 family.

This is UPF0358 protein lmo1070 from Listeria monocytogenes serovar 1/2a (strain ATCC BAA-679 / EGD-e).